Reading from the N-terminus, the 952-residue chain is Ubiquitin carboxyl-terminal hydrolase 15 (952 aa).

Ala-2 bears the N-acetylalanine mark. The interval 2-223 is mediates interaction with SART3; the sequence is AEGGAADLDT…KNEDGTWPRG (222 aa). In terms of domain architecture, DUSP spans 7–118; that stretch reads ADLDTQRSDI…GQEPIARKVV (112 aa). The 645-residue stretch at 260–904 folds into the USP domain; the sequence is CGLSNLGNTC…AAYVLFYQRQ (645 aa). Cys-269 acts as the Nucleophile in catalysis. At Thr-573 the chain carries Phosphothreonine. A disordered region spans residues 597-665; the sequence is ETDGPLRCCE…GGDNDSENGL (69 aa). Positions 627–644 are enriched in acidic residues; it reads METDEPDDESSQDQELPS. His-862 acts as the Proton acceptor in catalysis. Residues 923–952 are disordered; the sequence is SAATGVPLESDEDSNDNDNDLENENCMHTN. Positions 931-945 are enriched in acidic residues; that stretch reads ESDEDSNDNDNDLEN. Ser-932 and Ser-936 each carry phosphoserine.

This sequence belongs to the peptidase C19 family. In terms of assembly, a homodimer structure has been reported; however it is unclear whether the protein form a homodimer in vivo. Identified in a complex with the COP9 signalosome complex (CSN). Interacts with SMAD1, SMAD2 and SMAD3; the interaction is direct. Forms a complex with SMURF2 and SMAD7. Interacts with TGFBR1. Interacts with SART3; the interaction is direct. May interact with RNF20 and RNF40. May interact with PRKN. Interacts with INCA1. Post-translationally, phosphorylated. Phosphorylation protects against ubiquitination and subsequent degradation by the proteasome. Ubiquitinated, leading to degradation by the proteasome. As to expression, highly expressed in testis and spleen, and at lower level in other tissues.

It is found in the cytoplasm. The protein resides in the nucleus. Its subcellular location is the mitochondrion. The catalysed reaction is Thiol-dependent hydrolysis of ester, thioester, amide, peptide and isopeptide bonds formed by the C-terminal Gly of ubiquitin (a 76-residue protein attached to proteins as an intracellular targeting signal).. Hydrolase that removes conjugated ubiquitin from target proteins and regulates various pathways such as the TGF-beta receptor signaling, NF-kappa-B and RNF41/NRDP1-PRKN pathways. Acts as a key regulator of TGF-beta receptor signaling pathway, but the precise mechanism is still unclear: according to a report, acts by promoting deubiquitination of monoubiquitinated R-SMADs (SMAD1, SMAD2 and/or SMAD3), thereby alleviating inhibition of R-SMADs and promoting activation of TGF-beta target genes. According to another reports, regulates the TGF-beta receptor signaling pathway by mediating deubiquitination and stabilization of TGFBR1, leading to an enhanced TGF-beta signal. Able to mediate deubiquitination of monoubiquitinated substrates, 'Lys-27'-, 'Lys-48'- and 'Lys-63'-linked polyubiquitin chains. May also regulate gene expression and/or DNA repair through the deubiquitination of histone H2B. Acts as an inhibitor of mitophagy by counteracting the action of parkin (PRKN): hydrolyzes cleavage of 'Lys-48'- and 'Lys-63'-linked polyubiquitin chains attached by parkin on target proteins such as MFN2, thereby reducing parkin's ability to drive mitophagy. Acts as an associated component of COP9 signalosome complex (CSN) and regulates different pathways via this association: regulates NF-kappa-B by mediating deubiquitination of NFKBIA and deubiquitinates substrates bound to VCP. Involved in endosome organization by mediating deubiquitination of SQSTM1: ubiquitinated SQSTM1 forms a molecular bridge that restrains cognate vesicles in the perinuclear region and its deubiquitination releases target vesicles for fast transport into the cell periphery. Acts as a negative regulator of antifungal immunity by mediating 'Lys-27'-linked deubiquitination of CARD9, thereby inactivating CARD9. This Rattus norvegicus (Rat) protein is Ubiquitin carboxyl-terminal hydrolase 15 (Usp15).